The following is a 94-amino-acid chain: Large ribosomal subunit protein bL25 (94 aa).

Belongs to the bacterial ribosomal protein bL25 family. Part of the 50S ribosomal subunit; part of the 5S rRNA/L5/L18/L25 subcomplex. Contacts the 5S rRNA. Binds to the 5S rRNA independently of L5 and L18.

Its function is as follows. This is one of the proteins that binds to the 5S RNA in the ribosome where it forms part of the central protuberance. In Klebsiella pneumoniae subsp. pneumoniae (strain ATCC 700721 / MGH 78578), this protein is Large ribosomal subunit protein bL25.